The chain runs to 458 residues: Argininosuccinate lyase (458 aa).

This sequence belongs to the lyase 1 family. Argininosuccinate lyase subfamily.

It is found in the cytoplasm. The enzyme catalyses 2-(N(omega)-L-arginino)succinate = fumarate + L-arginine. Its pathway is amino-acid biosynthesis; L-arginine biosynthesis; L-arginine from L-ornithine and carbamoyl phosphate: step 3/3. The protein is Argininosuccinate lyase of Citrifermentans bemidjiense (strain ATCC BAA-1014 / DSM 16622 / JCM 12645 / Bem) (Geobacter bemidjiensis).